Here is a 329-residue protein sequence, read N- to C-terminus: Transcription factor TGA2.3 (329 aa).

A disordered region spans residues 1 to 48 (MADMSPRTDTSTDDTDDNHMLEPGQLALAAASDSDRSKDKHEDQKTLR). Residues 33 to 46 (DSDRSKDKHEDQKT) are compositionally biased toward basic and acidic residues. The bZIP domain maps to 43–87 (DQKTLRRLAQNREAARKSRLRKKAYVQQLENSRLKLTQLEQELQR). Residues 45-65 (KTLRRLAQNREAARKSRLRKK) form a basic motif region. Residues 71–85 (LENSRLKLTQLEQEL) form a leucine-zipper region. Residues 110-326 (ALAFDMEYAR…RALSSLWLAR (217 aa)) enclose the DOG1 domain.

It belongs to the bZIP family. As to quaternary structure, interacts with NPR1/NH1 and NPR3/NH3.

Its subcellular location is the nucleus. Transcriptional regulator involved in defense response. The polypeptide is Transcription factor TGA2.3 (Oryza sativa subsp. japonica (Rice)).